The chain runs to 521 residues: Feruloyl esterase B (521 aa).

Residues 1-17 form the signal peptide; sequence MKVASLLSLALPGAALA. 2 disulfides stabilise this stretch: Cys26–Cys72 and Cys61–Cys111. Residues Asn37, Asn51, Asn77, Asn95, Asn144, and Asn177 are each glycosylated (N-linked (GlcNAc...) asparagine). 3 cysteine pairs are disulfide-bonded: Cys184/Cys438, Cys253/Cys270, and Cys279/Cys288. Catalysis depends on Ser185, which acts as the Acyl-ester intermediate. Ca(2+)-binding residues include Asp254, Asp257, Ala259, Asp261, and Ile263. Residues Asn284, Asn347, Asn352, and Asn378 are each glycosylated (N-linked (GlcNAc...) asparagine). Residues Asp397 and His437 each act as charge relay system in the active site. 2 N-linked (GlcNAc...) asparagine glycosylation sites follow: Asn488 and Asn511. Residues Cys498 and Cys520 are joined by a disulfide bond.

It belongs to the tannase family. As to quaternary structure, homodimer. Glycosylated.

It is found in the secreted. It carries out the reaction feruloyl-polysaccharide + H2O = ferulate + polysaccharide.. Its activity is regulated as follows. Inhibited by the specific serine esterase inhibitor AEBSF. In terms of biological role, involved in degradation of plant cell walls. Hydrolyzes of the feruloyl-arabinose ester bond in arabinoxylans as well as the feruloyl-galactose and feruloyl-arabinose ester bonds in pectin. This chain is Feruloyl esterase B (faeB), found in Aspergillus niger.